The following is a 456-amino-acid chain: Bifunctional protein GlmU (456 aa).

The pyrophosphorylase stretch occupies residues 1–229 (MLNNAMSVVI…LSEVEGVNNR (229 aa)). UDP-N-acetyl-alpha-D-glucosamine-binding positions include 11–14 (LAAG), Lys25, Gln76, 81–82 (GT), 103–105 (YGD), Gly140, Glu154, Asn169, and Asn227. Asp105 contacts Mg(2+). Asn227 contributes to the Mg(2+) binding site. A linker region spans residues 230–250 (LQLSRLERVYQSEQAEKLLLA). Residues 251–456 (GVMLRDPARF…EGWRRPVKKK (206 aa)) are N-acetyltransferase. 2 residues coordinate UDP-N-acetyl-alpha-D-glucosamine: Arg333 and Lys351. His363 (proton acceptor) is an active-site residue. Positions 366 and 377 each coordinate UDP-N-acetyl-alpha-D-glucosamine. Residues Ala380, 386–387 (NY), Ser405, Ala423, and Arg440 contribute to the acetyl-CoA site.

It in the N-terminal section; belongs to the N-acetylglucosamine-1-phosphate uridyltransferase family. In the C-terminal section; belongs to the transferase hexapeptide repeat family. As to quaternary structure, homotrimer. Mg(2+) is required as a cofactor.

Its subcellular location is the cytoplasm. It catalyses the reaction alpha-D-glucosamine 1-phosphate + acetyl-CoA = N-acetyl-alpha-D-glucosamine 1-phosphate + CoA + H(+). The catalysed reaction is N-acetyl-alpha-D-glucosamine 1-phosphate + UTP + H(+) = UDP-N-acetyl-alpha-D-glucosamine + diphosphate. Its pathway is nucleotide-sugar biosynthesis; UDP-N-acetyl-alpha-D-glucosamine biosynthesis; N-acetyl-alpha-D-glucosamine 1-phosphate from alpha-D-glucosamine 6-phosphate (route II): step 2/2. It functions in the pathway nucleotide-sugar biosynthesis; UDP-N-acetyl-alpha-D-glucosamine biosynthesis; UDP-N-acetyl-alpha-D-glucosamine from N-acetyl-alpha-D-glucosamine 1-phosphate: step 1/1. The protein operates within bacterial outer membrane biogenesis; LPS lipid A biosynthesis. In terms of biological role, catalyzes the last two sequential reactions in the de novo biosynthetic pathway for UDP-N-acetylglucosamine (UDP-GlcNAc). The C-terminal domain catalyzes the transfer of acetyl group from acetyl coenzyme A to glucosamine-1-phosphate (GlcN-1-P) to produce N-acetylglucosamine-1-phosphate (GlcNAc-1-P), which is converted into UDP-GlcNAc by the transfer of uridine 5-monophosphate (from uridine 5-triphosphate), a reaction catalyzed by the N-terminal domain. The polypeptide is Bifunctional protein GlmU (Escherichia coli O8 (strain IAI1)).